Consider the following 758-residue polypeptide: 5-methyltetrahydropteroyltriglutamate--homocysteine methyltransferase (758 aa).

Residues 17-20 and Lys-117 each bind 5-methyltetrahydropteroyltri-L-glutamate; that span reads RELK. L-homocysteine-binding positions include 434-436 and Glu-487; that span reads IGS. L-methionine contacts are provided by residues 434–436 and Glu-487; that span reads IGS. 5-methyltetrahydropteroyltri-L-glutamate contacts are provided by residues 518–519 and Trp-564; that span reads RC. Asp-602 is an L-homocysteine binding site. Asp-602 contacts L-methionine. Residue Glu-608 participates in 5-methyltetrahydropteroyltri-L-glutamate binding. Zn(2+) contacts are provided by His-644, Cys-646, and Glu-668. Residue His-697 is the Proton donor of the active site. Cys-729 provides a ligand contact to Zn(2+).

It belongs to the vitamin-B12 independent methionine synthase family. The cofactor is Zn(2+).

The catalysed reaction is 5-methyltetrahydropteroyltri-L-glutamate + L-homocysteine = tetrahydropteroyltri-L-glutamate + L-methionine. It participates in amino-acid biosynthesis; L-methionine biosynthesis via de novo pathway; L-methionine from L-homocysteine (MetE route): step 1/1. In terms of biological role, catalyzes the transfer of a methyl group from 5-methyltetrahydrofolate to homocysteine resulting in methionine formation. This Photorhabdus laumondii subsp. laumondii (strain DSM 15139 / CIP 105565 / TT01) (Photorhabdus luminescens subsp. laumondii) protein is 5-methyltetrahydropteroyltriglutamate--homocysteine methyltransferase.